We begin with the raw amino-acid sequence, 61 residues long: Cytotoxin homolog 3 (61 aa).

4 disulfide bridges follow: cysteine 3–cysteine 22, cysteine 15–cysteine 39, cysteine 43–cysteine 54, and cysteine 55–cysteine 60.

The protein belongs to the three-finger toxin family. Short-chain subfamily. Orphan group XV sub-subfamily. In terms of tissue distribution, expressed by the venom gland.

The protein resides in the secreted. Its subcellular location is the target cell membrane. Has low cytotoxic activity. The protein is Cytotoxin homolog 3 of Naja melanoleuca (Forest cobra).